Here is a 216-residue protein sequence, read N- to C-terminus: Redox-sensing transcriptional repressor Rex (216 aa).

Residues 20 to 59 (QYYRLFKSLVEENVTRTNSQLISEKIGVDAATIRRDFSLF) constitute a DNA-binding region (H-T-H motif). 94–99 (GVGNLG) serves as a coordination point for NAD(+).

This sequence belongs to the transcriptional regulatory Rex family. Homodimer.

It is found in the cytoplasm. Functionally, modulates transcription in response to changes in cellular NADH/NAD(+) redox state. In Lactococcus lactis subsp. lactis (strain IL1403) (Streptococcus lactis), this protein is Redox-sensing transcriptional repressor Rex.